Reading from the N-terminus, the 469-residue chain is Adenosylhomocysteinase (469 aa).

Substrate-binding residues include Thr-60, Asp-135, and Glu-195. Residue 196–198 coordinates NAD(+); sequence TTT. 2 residues coordinate substrate: Lys-225 and Asp-229. NAD(+) is bound by residues Asn-230, 259 to 264, Glu-282, Asn-317, 338 to 340, and Asn-383; these read GYGDVG and IGH.

Belongs to the adenosylhomocysteinase family. Requires NAD(+) as cofactor.

It is found in the cytoplasm. It carries out the reaction S-adenosyl-L-homocysteine + H2O = L-homocysteine + adenosine. It participates in amino-acid biosynthesis; L-homocysteine biosynthesis; L-homocysteine from S-adenosyl-L-homocysteine: step 1/1. Its function is as follows. May play a key role in the regulation of the intracellular concentration of adenosylhomocysteine. The chain is Adenosylhomocysteinase from Hyphomonas neptunium (strain ATCC 15444).